A 328-amino-acid polypeptide reads, in one-letter code: L-lactate dehydrogenase (328 aa).

Residues V18, E39, K46, Y71, and 85–86 each bind NAD(+); that span reads GA. Residues Q88 and R94 each coordinate substrate. NAD(+) is bound by residues S107, 124-126, and S149; that span reads AAN. 126–129 provides a ligand contact to substrate; the sequence is NPVD. 154-157 is a binding site for substrate; sequence DSAR. Residues R159 and H174 each coordinate beta-D-fructose 1,6-bisphosphate. The Proton acceptor role is filled by H181. A Phosphotyrosine modification is found at Y226. Residue T235 coordinates substrate.

Belongs to the LDH/MDH superfamily. LDH family. In terms of assembly, homotetramer.

Its subcellular location is the cytoplasm. It carries out the reaction (S)-lactate + NAD(+) = pyruvate + NADH + H(+). Its pathway is fermentation; pyruvate fermentation to lactate; (S)-lactate from pyruvate: step 1/1. With respect to regulation, allosterically activated by fructose 1,6-bisphosphate (FBP). Functionally, catalyzes the conversion of lactate to pyruvate. This is L-lactate dehydrogenase from Streptococcus gordonii (strain Challis / ATCC 35105 / BCRC 15272 / CH1 / DL1 / V288).